The following is a 133-amino-acid chain: Small ribosomal subunit protein uS11 (133 aa).

It belongs to the universal ribosomal protein uS11 family. As to quaternary structure, part of the 30S ribosomal subunit. Interacts with proteins S7 and S18. Binds to IF-3.

Located on the platform of the 30S subunit, it bridges several disparate RNA helices of the 16S rRNA. Forms part of the Shine-Dalgarno cleft in the 70S ribosome. The polypeptide is Small ribosomal subunit protein uS11 (Burkholderia pseudomallei (strain 1106a)).